The following is a 676-amino-acid chain: tRNA 5-methylaminomethyl-2-thiouridine biosynthesis bifunctional protein MnmC (676 aa).

Residues 1–241 (MFTVTPAKIY…KRECLCGIKN (241 aa)) are tRNA (mnm(5)s(2)U34)-methyltransferase. Positions 268–676 (IGGGIASLFT…RKLLKGTEIK (409 aa)) are FAD-dependent cmnm(5)s(2)U34 oxidoreductase.

This sequence in the N-terminal section; belongs to the methyltransferase superfamily. tRNA (mnm(5)s(2)U34)-methyltransferase family. The protein in the C-terminal section; belongs to the DAO family. Requires FAD as cofactor.

Its subcellular location is the cytoplasm. It carries out the reaction 5-aminomethyl-2-thiouridine(34) in tRNA + S-adenosyl-L-methionine = 5-methylaminomethyl-2-thiouridine(34) in tRNA + S-adenosyl-L-homocysteine + H(+). In terms of biological role, catalyzes the last two steps in the biosynthesis of 5-methylaminomethyl-2-thiouridine (mnm(5)s(2)U) at the wobble position (U34) in tRNA. Catalyzes the FAD-dependent demodification of cmnm(5)s(2)U34 to nm(5)s(2)U34, followed by the transfer of a methyl group from S-adenosyl-L-methionine to nm(5)s(2)U34, to form mnm(5)s(2)U34. The chain is tRNA 5-methylaminomethyl-2-thiouridine biosynthesis bifunctional protein MnmC from Histophilus somni (strain 2336) (Haemophilus somnus).